Consider the following 496-residue polypeptide: MALRAGEHSQEAANGLKEKVLTLDSMNPYVRRVEYAVRGPIVQRALELEQELRQGVKKPFTEVIRANIGDAQAMGQIPITFPRQVLALCVHPDLLNSPDFPDDAKRRAERILQACGGHSLGAYSISAGVQMIREDVARYIERRDGGIPADPNNIFLSTGASDAIVTVLKLLVTGEGRTRTGVLIPIPQYPLYSAALAEFNAVQVDYYLDEERAWALDVAELRRALRQARDHCRPRALCVINPGNPTGQVQTRECIEDVIRFAYEEKLFLLADEVYQDNVYAESSQFHSFKKVLTEMGPPYAAQQELASFHSISKGYMGECGFRGGYVEVVNMDAAVKQQMQKLRSVRLCPPTPGQVLLDVAVSPPAPSDPSFPRFQAERRAVLAELAAKAKLTEQVFNEAPGIRCNPVQGAMYSFPRVQLPPRAVQRAQELGLAPDMFFCLRLLEETGICVVPGSGFGQREGTYHFRMTILPPMEKLRPLLEKLSQFHAKFTREYS.

Alanine 2 carries the post-translational modification N-acetylalanine. Threonine 22 is subject to Phosphothreonine. An N6-(pyridoxal phosphate)lysine modification is found at lysine 314.

Belongs to the class-I pyridoxal-phosphate-dependent aminotransferase family. Alanine aminotransferase subfamily. Homodimer. The cofactor is pyridoxal 5'-phosphate.

The protein localises to the cytoplasm. The enzyme catalyses L-alanine + 2-oxoglutarate = pyruvate + L-glutamate. It functions in the pathway amino-acid degradation; L-alanine degradation via transaminase pathway; pyruvate from L-alanine: step 1/1. In terms of biological role, catalyzes the reversible transamination between alanine and 2-oxoglutarate to form pyruvate and glutamate. Participates in cellular nitrogen metabolism and also in liver gluconeogenesis starting with precursors transported from skeletal muscles. The protein is Alanine aminotransferase 1 (GPT) of Bos taurus (Bovine).